A 329-amino-acid chain; its full sequence is Fructose-1,6-bisphosphatase class 1 (329 aa).

Positions 84, 103, 105, and 106 each coordinate Mg(2+). Substrate contacts are provided by residues 106–109 (DGSS), Asn196, and Lys262. Glu268 contributes to the Mg(2+) binding site.

It belongs to the FBPase class 1 family. Homotetramer. The cofactor is Mg(2+).

Its subcellular location is the cytoplasm. It carries out the reaction beta-D-fructose 1,6-bisphosphate + H2O = beta-D-fructose 6-phosphate + phosphate. Its pathway is carbohydrate biosynthesis; gluconeogenesis. The chain is Fructose-1,6-bisphosphatase class 1 from Shewanella sediminis (strain HAW-EB3).